The sequence spans 248 residues: Prepilin leader peptidase/N-methyltransferase (248 aa).

A helical transmembrane segment spans residues 1–21 (MLSILFIFGLILGSFYYTAGC). Cysteine 36, cysteine 39, cysteine 61, and cysteine 64 together coordinate Zn(2+). 6 helical membrane passes run 68 to 88 (ISFM…AAGI), 90 to 110 (FGIS…IIVA), 114 to 134 (IHFM…LAAA), 143 to 163 (WYAG…IAAI), 178 to 198 (VIGF…SVLI), and 223 to 243 (AIAA…SFYI).

This sequence belongs to the peptidase A24 family. Zn(2+) is required as a cofactor.

It localises to the cell membrane. It carries out the reaction Typically cleaves a -Gly-|-Phe- bond to release an N-terminal, basic peptide of 5-8 residues from type IV prepilin, and then N-methylates the new N-terminal amino group, the methyl donor being S-adenosyl-L-methionine.. Plays a role in type II pseudopili formation by proteolytically removing the leader sequence from substrate proteins and subsequently monomethylating the alpha-amino group of the newly exposed N-terminal phenylalanine. Substrates include proteins required for biogenesis of the type II general secretory apparatus. The sequence is that of Prepilin leader peptidase/N-methyltransferase (comC) from Bacillus subtilis (strain 168).